Reading from the N-terminus, the 591-residue chain is V-type ATP synthase alpha chain (591 aa).

233–240 is a binding site for ATP; it reads GPFGAGKT.

Belongs to the ATPase alpha/beta chains family.

The enzyme catalyses ATP + H2O + 4 H(+)(in) = ADP + phosphate + 5 H(+)(out). Its function is as follows. Produces ATP from ADP in the presence of a proton gradient across the membrane. The V-type alpha chain is a catalytic subunit. The sequence is that of V-type ATP synthase alpha chain from Streptococcus pyogenes serotype M1.